The following is an 84-amino-acid chain: MTDKIRTVQGKVVSDKMDKSFVVAIERTVKHPLYGKFIRRTTKLHVHDENNEAKLGDVVEIKECRPVSKTKSHTLVRVVEKAVA.

Belongs to the universal ribosomal protein uS17 family. Part of the 30S ribosomal subunit.

One of the primary rRNA binding proteins, it binds specifically to the 5'-end of 16S ribosomal RNA. This Actinobacillus pleuropneumoniae serotype 5b (strain L20) protein is Small ribosomal subunit protein uS17.